A 146-amino-acid chain; its full sequence is 1,4-dihydroxy-2-naphthoyl-CoA hydrolase (146 aa).

Residue D15 is part of the active site.

It belongs to the 4-hydroxybenzoyl-CoA thioesterase family. DHNA-CoA hydrolase subfamily.

It carries out the reaction 1,4-dihydroxy-2-naphthoyl-CoA + H2O = 1,4-dihydroxy-2-naphthoate + CoA + H(+). It participates in cofactor biosynthesis; phylloquinone biosynthesis. Its pathway is quinol/quinone metabolism; 1,4-dihydroxy-2-naphthoate biosynthesis; 1,4-dihydroxy-2-naphthoate from chorismate: step 7/7. In terms of biological role, catalyzes the hydrolysis of 1,4-dihydroxy-2-naphthoyl-CoA (DHNA-CoA) to 1,4-dihydroxy-2-naphthoate (DHNA), a reaction involved in phylloquinone (vitamin K1) biosynthesis. This Picosynechococcus sp. (strain ATCC 27264 / PCC 7002 / PR-6) (Agmenellum quadruplicatum) protein is 1,4-dihydroxy-2-naphthoyl-CoA hydrolase.